A 314-amino-acid polypeptide reads, in one-letter code: E3 ubiquitin-protein ligase SINA-like 11 (314 aa).

Residues 1 to 12 (MEDSNSHPQNQT) show a composition bias toward polar residues. A disordered region spans residues 1–31 (MEDSNSHPQNQTSKRKSSHPQKKQRMENETR). The span at 13–23 (SKRKSSHPQKK) shows a compositional bias: basic residues. An RING-type; degenerate zinc finger spans residues 43-81 (CPVCFEPLTIPTFQCDDGHIVCNFCFAKVSNKCPGPGCD). An SBD region spans residues 95 to 280 (VLESAFVPCQ…PANEVQQVTI (186 aa)). The segment at 98-156 (SAFVPCQNTEFGCTKSVSYEKVSSHEKECNYSQCSCPNLECNYTGSYNIIYGHFMRRHL) adopts an SIAH-type zinc-finger fold. Zn(2+) contacts are provided by Cys103, Cys110, His122, Cys126, Cys133, Cys138, His150, and His155.

This sequence belongs to the SINA (Seven in absentia) family.

It carries out the reaction S-ubiquitinyl-[E2 ubiquitin-conjugating enzyme]-L-cysteine + [acceptor protein]-L-lysine = [E2 ubiquitin-conjugating enzyme]-L-cysteine + N(6)-ubiquitinyl-[acceptor protein]-L-lysine.. It participates in protein modification; protein ubiquitination. Its function is as follows. E3 ubiquitin-protein ligase that mediates ubiquitination and subsequent proteasomal degradation of target proteins. E3 ubiquitin ligases accept ubiquitin from an E2 ubiquitin-conjugating enzyme in the form of a thioester and then directly transfers the ubiquitin to targeted substrates. It probably triggers the ubiquitin-mediated degradation of different substrates. This chain is E3 ubiquitin-protein ligase SINA-like 11, found in Arabidopsis thaliana (Mouse-ear cress).